A 328-amino-acid polypeptide reads, in one-letter code: Naphthalene 1,2-dioxygenase/salicylate 5-hydroxylase systems, ferredoxin--NAD(P)(+), reductase component (328 aa).

Positions 1–89 constitute a 2Fe-2S ferredoxin-type domain; sequence MELVVEPLNL…DCTIEIPESD (89 aa). [2Fe-2S] cluster contacts are provided by cysteine 35, cysteine 40, cysteine 43, and cysteine 73. Residues 96–193 form the FAD-binding FR-type domain; the sequence is ARIVKGTVTA…SGPLGTAYLR (98 aa).

This sequence belongs to the bacterial ring-hydroxylating dioxygenase ferredoxin reductase family. As to quaternary structure, ferredoxin reductase NagAa belongs to both the salicylate 5-hydroxylase (S5H) and the naphthalene 1,2-dioxygenase (NDO) multicomponent enzyme systems. The NDO multicomponent enzyme system is composed of an electron transfer component and a dioxygenase component (iron sulfur protein (ISP)). The electron transfer component is composed of a ferredoxin reductase (NagAa) and a ferredoxin (NagAb), and the dioxygenase component is formed by a large alpha subunit (NagAc) and a small beta subunit (NagAd). The S5H multicomponent enzyme system is composed of an electron transfer component and a monooxygenase component. The electron transfer component is comprised of a ferredoxin reductase (NagAa) and a ferredoxin (NagAb), and the monooxygenase component is formed by a large subunit (NagG) and a small subunit (NagH). Requires [2Fe-2S] cluster as cofactor. The cofactor is FAD.

It carries out the reaction 2 reduced [2Fe-2S]-[ferredoxin] + NAD(+) + H(+) = 2 oxidized [2Fe-2S]-[ferredoxin] + NADH. It catalyses the reaction 2 reduced [2Fe-2S]-[ferredoxin] + NADP(+) + H(+) = 2 oxidized [2Fe-2S]-[ferredoxin] + NADPH. It participates in aromatic compound metabolism; naphthalene degradation. Its function is as follows. Component of two multicomponent enzyme systems which are involved in the catabolism of naphthalene. Plays a role as an electron transfer component for both salicylate 5-hydroxylase (S5H) and naphthalene 1,2-dioxygenase (NDO) systems, by transferring electrons from NAD(P)H to the oxygenase component via the ferredoxin NagAb. The electron transport chain from the two systems can use both NADH and NADPH as electron donors at approximately similar rates. The sequence is that of Naphthalene 1,2-dioxygenase/salicylate 5-hydroxylase systems, ferredoxin--NAD(P)(+), reductase component from Ralstonia sp.